The following is a 65-amino-acid chain: Prokaryotic ubiquitin-like protein Pup (65 aa).

The segment at 1–38 is disordered; sequence MANAQQQVFGGGGGDDAENNDAPQQGSGTQQVNVTGTD. The interval 21–59 is ARC ATPase binding; it reads DAPQQGSGTQQVNVTGTDDLLDEIDGLLETNAEEFVRSY. The segment covering 22–34 has biased composition (polar residues); sequence APQQGSGTQQVNV. Position 65 is a deamidated glutamine (glutamine 65). Residue glutamine 65 forms an Isoglutamyl lysine isopeptide (Gln-Lys) (interchain with K-? in acceptor proteins) linkage.

It belongs to the prokaryotic ubiquitin-like protein family. Strongly interacts with the proteasome-associated ATPase ARC through a hydrophobic interface; the interacting region of Pup lies in its C-terminal half. There is one Pup binding site per ARC hexamer ring. Is modified by deamidation of its C-terminal glutamine to glutamate by the deamidase Dop, a prerequisite to the subsequent pupylation process.

It participates in protein degradation; proteasomal Pup-dependent pathway. Functionally, protein modifier that is covalently attached to lysine residues of substrate proteins, thereby targeting them for proteasomal degradation. The tagging system is termed pupylation. This chain is Prokaryotic ubiquitin-like protein Pup, found in Corynebacterium urealyticum (strain ATCC 43042 / DSM 7109).